The following is a 718-amino-acid chain: Putative proline-rich receptor-like protein kinase PERK11 (718 aa).

Residues 1–256 are disordered; sequence MDKVQQQADL…GGTSQQSNES (256 aa). The Extracellular portion of the chain corresponds to 1 to 262; that stretch reads MDKVQQQADL…SNESNYTEKT (262 aa). Composition is skewed to pro residues over residues 45–105, 115–132, and 157–167; these read ATSP…PPQS, IPFPKPQLPPPSLFPPPS, and LPSPPSTPFSP. 2 stretches are compositionally biased toward low complexity: residues 168 to 203 and 211 to 244; these read PSQENSGSQGSPPLSSLLPPMLPLNPNSPGNPLQPL and SNRVPSSSSSPSPPSLSGSNNHSGGSNRHNANSN. N-linked (GlcNAc...) asparagine glycosylation is found at asparagine 231, asparagine 254, and asparagine 257. The helical transmembrane segment at 263-283 threads the bilayer; it reads VIGIGIAGVLVILFIAGVFFV. At 284-718 the chain is on the cytoplasmic side; the sequence is RRKQKKGSSS…RAFNTSHRNH (435 aa). Positions 314-348 are disordered; it reads HYRQKPGNGNSSAQNSSPDTNSLGNPKHGRGTPDS. Residues 320–337 are compositionally biased toward polar residues; the sequence is GNGNSSAQNSSPDTNSLG. Phosphothreonine is present on threonine 359. A Protein kinase domain is found at 370 to 649; sequence FCKSFVVGEG…VRALDTRDDL (280 aa). ATP contacts are provided by residues 376-384 and lysine 398; that span reads VGEGGFGCV. Tyrosine 443 is subject to Phosphotyrosine. Aspartate 494 (proton acceptor) is an active-site residue. Phosphoserine occurs at positions 498 and 527. Threonine 528 and threonine 533 each carry phosphothreonine. Tyrosine 541 carries the phosphotyrosine modification. The tract at residues 683–718 is disordered; sequence SSDLGTNTGYYPSQDYATSHEYESESRAFNTSHRNH. Polar residues-rich tracts occupy residues 685 to 699 and 709 to 718; these read DLGTNTGYYPSQDYA and RAFNTSHRNH.

The protein belongs to the protein kinase superfamily. Ser/Thr protein kinase family. In terms of tissue distribution, mostly expressed in flower buds.

Its subcellular location is the cell membrane. It catalyses the reaction L-seryl-[protein] + ATP = O-phospho-L-seryl-[protein] + ADP + H(+). The enzyme catalyses L-threonyl-[protein] + ATP = O-phospho-L-threonyl-[protein] + ADP + H(+). The protein is Putative proline-rich receptor-like protein kinase PERK11 (PERK11) of Arabidopsis thaliana (Mouse-ear cress).